The chain runs to 968 residues: Isoleucine--tRNA ligase (968 aa).

Residues 68 to 78 carry the 'HIGH' region motif; that stretch reads PYANGALHMGH. Residue E584 participates in L-isoleucyl-5'-AMP binding. A 'KMSKS' region motif is present at residues 625–629; sequence KMSKS. K628 contacts ATP. Zn(2+) is bound by residues C938, C941, C958, and C961.

The protein belongs to the class-I aminoacyl-tRNA synthetase family. IleS type 1 subfamily. In terms of assembly, monomer. Requires Zn(2+) as cofactor.

It is found in the cytoplasm. The enzyme catalyses tRNA(Ile) + L-isoleucine + ATP = L-isoleucyl-tRNA(Ile) + AMP + diphosphate. Its function is as follows. Catalyzes the attachment of isoleucine to tRNA(Ile). As IleRS can inadvertently accommodate and process structurally similar amino acids such as valine, to avoid such errors it has two additional distinct tRNA(Ile)-dependent editing activities. One activity is designated as 'pretransfer' editing and involves the hydrolysis of activated Val-AMP. The other activity is designated 'posttransfer' editing and involves deacylation of mischarged Val-tRNA(Ile). The chain is Isoleucine--tRNA ligase from Synechococcus sp. (strain CC9311).